Consider the following 290-residue polypeptide: Undecaprenyl-diphosphatase (290 aa).

6 helical membrane-spanning segments follow: residues Pro39 to Phe59, Ala85 to Leu105, Leu118 to Ala138, Ser202 to Gly222, Pro230 to Met250, and Phe261 to Leu281.

Belongs to the UppP family.

The protein resides in the cell membrane. The enzyme catalyses di-trans,octa-cis-undecaprenyl diphosphate + H2O = di-trans,octa-cis-undecaprenyl phosphate + phosphate + H(+). Functionally, catalyzes the dephosphorylation of undecaprenyl diphosphate (UPP). Confers resistance to bacitracin. The protein is Undecaprenyl-diphosphatase of Streptomyces griseus subsp. griseus (strain JCM 4626 / CBS 651.72 / NBRC 13350 / KCC S-0626 / ISP 5235).